The sequence spans 190 residues: Protein GrpE (190 aa).

The span at 1-18 (MTETPNTSSEEIQTSEPS) shows a compositional bias: polar residues. A disordered region spans residues 1–21 (MTETPNTSSEEIQTSEPSPDN).

The protein belongs to the GrpE family. Homodimer.

Its subcellular location is the cytoplasm. Its function is as follows. Participates actively in the response to hyperosmotic and heat shock by preventing the aggregation of stress-denatured proteins, in association with DnaK and GrpE. It is the nucleotide exchange factor for DnaK and may function as a thermosensor. Unfolded proteins bind initially to DnaJ; upon interaction with the DnaJ-bound protein, DnaK hydrolyzes its bound ATP, resulting in the formation of a stable complex. GrpE releases ADP from DnaK; ATP binding to DnaK triggers the release of the substrate protein, thus completing the reaction cycle. Several rounds of ATP-dependent interactions between DnaJ, DnaK and GrpE are required for fully efficient folding. This is Protein GrpE from Chlamydia trachomatis serovar A (strain ATCC VR-571B / DSM 19440 / HAR-13).